The primary structure comprises 279 residues: B3 domain-containing protein Os05g0481400 (279 aa).

The segment at alanine 45–valine 68 is disordered. A DNA-binding region (TF-B3) is located at residues phenylalanine 139–valine 230. Composition is skewed to acidic residues over residues aspartate 233–alanine 244 and threonine 252–proline 262. Residues aspartate 233–arginine 279 form a disordered region. Positions glycine 269–arginine 279 are enriched in basic residues.

The protein resides in the nucleus. This chain is B3 domain-containing protein Os05g0481400, found in Oryza sativa subsp. japonica (Rice).